We begin with the raw amino-acid sequence, 354 residues long: UDP-N-acetylglucosamine--N-acetylmuramyl-(pentapeptide) pyrophosphoryl-undecaprenol N-acetylglucosamine transferase (354 aa).

Residues 11-13 (TGG), Asn117, Arg160, Ser186, and Gln288 each bind UDP-N-acetyl-alpha-D-glucosamine.

This sequence belongs to the glycosyltransferase 28 family. MurG subfamily.

It is found in the cell inner membrane. The catalysed reaction is di-trans,octa-cis-undecaprenyl diphospho-N-acetyl-alpha-D-muramoyl-L-alanyl-D-glutamyl-meso-2,6-diaminopimeloyl-D-alanyl-D-alanine + UDP-N-acetyl-alpha-D-glucosamine = di-trans,octa-cis-undecaprenyl diphospho-[N-acetyl-alpha-D-glucosaminyl-(1-&gt;4)]-N-acetyl-alpha-D-muramoyl-L-alanyl-D-glutamyl-meso-2,6-diaminopimeloyl-D-alanyl-D-alanine + UDP + H(+). Its pathway is cell wall biogenesis; peptidoglycan biosynthesis. Functionally, cell wall formation. Catalyzes the transfer of a GlcNAc subunit on undecaprenyl-pyrophosphoryl-MurNAc-pentapeptide (lipid intermediate I) to form undecaprenyl-pyrophosphoryl-MurNAc-(pentapeptide)GlcNAc (lipid intermediate II). The protein is UDP-N-acetylglucosamine--N-acetylmuramyl-(pentapeptide) pyrophosphoryl-undecaprenol N-acetylglucosamine transferase of Rickettsia canadensis (strain McKiel).